We begin with the raw amino-acid sequence, 529 residues long: Putative E3 ubiquitin-protein ligase ARI4 (529 aa).

Over residues 1–22 the composition is skewed to acidic residues; the sequence is MDDEYMSLEEEEDNCYPSEFDD. Positions 1-23 are disordered; it reads MDDEYMSLEEEEDNCYPSEFDDH. Residues 115-327 form a TRIAD supradomain region; it reads KTMKCDICME…IAGHSCGRYK (213 aa). Zn(2+) is bound by residues Cys-119, Cys-122, Cys-137, His-139, Cys-142, Cys-145, Cys-164, Cys-169, Cys-206, Cys-212, Cys-230, Cys-232, Cys-237, Cys-240, His-245, Cys-250, Cys-277, and Cys-280. An RING-type 1 zinc finger spans residues 119–169; that stretch reads CDICMEEDLSKYAMTRMECGHRFCNDCWKEHFTVRINEGEGKRIRCMAYKC. The IBR-type zinc-finger motif lies at 186-250; sequence EKFDRFLIES…LSESHSPCSC (65 aa). The RING-type 2; atypical zinc-finger motif lies at 277–305; the sequence is CPKCSKPIQKRDGCNHMTCKCGQHFCWLC. Cys-290 is an active-site residue. Residues Cys-295, Cys-297, Cys-302, Cys-305, His-313, and Cys-323 each coordinate Zn(2+).

This sequence belongs to the RBR family. Ariadne subfamily. Zn(2+) is required as a cofactor.

The catalysed reaction is [E2 ubiquitin-conjugating enzyme]-S-ubiquitinyl-L-cysteine + [acceptor protein]-L-lysine = [E2 ubiquitin-conjugating enzyme]-L-cysteine + [acceptor protein]-N(6)-ubiquitinyl-L-lysine.. It functions in the pathway protein modification; protein ubiquitination. Might act as an E3 ubiquitin-protein ligase, or as part of E3 complex, which accepts ubiquitin from specific E2 ubiquitin-conjugating enzymes and then transfers it to substrates. This chain is Putative E3 ubiquitin-protein ligase ARI4 (ARI4), found in Arabidopsis thaliana (Mouse-ear cress).